Reading from the N-terminus, the 173-residue chain is NADH-quinone oxidoreductase subunit B (173 aa).

4 residues coordinate [4Fe-4S] cluster: Cys52, Cys53, Cys117, and Cys147.

Belongs to the complex I 20 kDa subunit family. NDH-1 is composed of 14 different subunits. Subunits NuoB, C, D, E, F, and G constitute the peripheral sector of the complex. The cofactor is [4Fe-4S] cluster.

It is found in the cell inner membrane. The catalysed reaction is a quinone + NADH + 5 H(+)(in) = a quinol + NAD(+) + 4 H(+)(out). NDH-1 shuttles electrons from NADH, via FMN and iron-sulfur (Fe-S) centers, to quinones in the respiratory chain. Couples the redox reaction to proton translocation (for every two electrons transferred, four hydrogen ions are translocated across the cytoplasmic membrane), and thus conserves the redox energy in a proton gradient. The protein is NADH-quinone oxidoreductase subunit B of Pelagibacter ubique (strain HTCC1062).